The sequence spans 382 residues: Alkanesulfonate monooxygenase (382 aa).

The protein belongs to the SsuD family.

It carries out the reaction an alkanesulfonate + FMNH2 + O2 = an aldehyde + FMN + sulfite + H2O + 2 H(+). In terms of biological role, catalyzes the desulfonation of aliphatic sulfonates. This Pseudomonas entomophila (strain L48) protein is Alkanesulfonate monooxygenase.